Consider the following 87-residue polypeptide: Translation initiation factor IF-1 2 (87 aa).

The S1-like domain maps to 1–72 (MAKEEVIEME…TKGRINFRHK (72 aa)).

It belongs to the IF-1 family. In terms of assembly, component of the 30S ribosomal translation pre-initiation complex which assembles on the 30S ribosome in the order IF-2 and IF-3, IF-1 and N-formylmethionyl-tRNA(fMet); mRNA recruitment can occur at any time during PIC assembly.

The protein resides in the cytoplasm. One of the essential components for the initiation of protein synthesis. Stabilizes the binding of IF-2 and IF-3 on the 30S subunit to which N-formylmethionyl-tRNA(fMet) subsequently binds. Helps modulate mRNA selection, yielding the 30S pre-initiation complex (PIC). Upon addition of the 50S ribosomal subunit IF-1, IF-2 and IF-3 are released leaving the mature 70S translation initiation complex. The chain is Translation initiation factor IF-1 2 from Thiobacillus denitrificans (strain ATCC 25259 / T1).